The primary structure comprises 433 residues: Serine--tRNA ligase (433 aa).

Residue 235–237 (TSE) participates in L-serine binding. 266-268 (RSE) lines the ATP pocket. An L-serine-binding site is contributed by Glu-289. 353 to 356 (EISS) provides a ligand contact to ATP. Ser-388 contributes to the L-serine binding site.

This sequence belongs to the class-II aminoacyl-tRNA synthetase family. Type-1 seryl-tRNA synthetase subfamily. Homodimer. The tRNA molecule binds across the dimer.

It localises to the cytoplasm. The enzyme catalyses tRNA(Ser) + L-serine + ATP = L-seryl-tRNA(Ser) + AMP + diphosphate + H(+). It carries out the reaction tRNA(Sec) + L-serine + ATP = L-seryl-tRNA(Sec) + AMP + diphosphate + H(+). Its pathway is aminoacyl-tRNA biosynthesis; selenocysteinyl-tRNA(Sec) biosynthesis; L-seryl-tRNA(Sec) from L-serine and tRNA(Sec): step 1/1. In terms of biological role, catalyzes the attachment of serine to tRNA(Ser). Is also able to aminoacylate tRNA(Sec) with serine, to form the misacylated tRNA L-seryl-tRNA(Sec), which will be further converted into selenocysteinyl-tRNA(Sec). The protein is Serine--tRNA ligase of Burkholderia orbicola (strain MC0-3).